The following is a 238-amino-acid chain: dITP/XTP pyrophosphatase (238 aa).

7-12 (SANQHK) serves as a coordination point for substrate. Residue Asp-89 is the Proton acceptor of the active site. Residue Asp-89 participates in Mg(2+) binding. Substrate contacts are provided by residues Ser-90, 191 to 194 (FGYD), Lys-217, and 222 to 223 (HR).

The protein belongs to the HAM1 NTPase family. As to quaternary structure, homodimer. It depends on Mg(2+) as a cofactor.

The catalysed reaction is XTP + H2O = XMP + diphosphate + H(+). It carries out the reaction dITP + H2O = dIMP + diphosphate + H(+). The enzyme catalyses ITP + H2O = IMP + diphosphate + H(+). Pyrophosphatase that catalyzes the hydrolysis of nucleoside triphosphates to their monophosphate derivatives, with a high preference for the non-canonical purine nucleotides XTP (xanthosine triphosphate), dITP (deoxyinosine triphosphate) and ITP. Seems to function as a house-cleaning enzyme that removes non-canonical purine nucleotides from the nucleotide pool, thus preventing their incorporation into DNA/RNA and avoiding chromosomal lesions. The chain is dITP/XTP pyrophosphatase from Helicobacter hepaticus (strain ATCC 51449 / 3B1).